We begin with the raw amino-acid sequence, 65 residues long: Conotoxin TsMRCL-05 (65 aa).

Residues 1 to 22 (MHCLPVLVILLLLIASTPSVDA) form the signal peptide. A propeptide spanning residues 23 to 52 (RPNPKDDVPLASFHGAVNAKRYLRTLWNSR) is cleaved from the precursor. An Isoleucine amide modification is found at I64.

Belongs to the conotoxin T superfamily. Contains 2 disulfide bonds that can be either 'C1-C3, C2-C4' or 'C1-C4, C2-C3', since these disulfide connectivities have been observed for conotoxins with cysteine framework V (for examples, see AC P0DQQ7 and AC P81755). As to expression, expressed by the venom duct.

Its subcellular location is the secreted. The protein is Conotoxin TsMRCL-05 of Conus tessulatus (Tessellate cone).